Here is a 155-residue protein sequence, read N- to C-terminus: Large ribosomal subunit protein uL30 (155 aa).

It belongs to the universal ribosomal protein uL30 family. In terms of assembly, part of the 50S ribosomal subunit.

The protein is Large ribosomal subunit protein uL30 of Pyrococcus furiosus (strain ATCC 43587 / DSM 3638 / JCM 8422 / Vc1).